A 110-amino-acid chain; its full sequence is uncharacterized protein (110 aa).

The helical transmembrane segment at methionine 18–methionine 34 threads the bilayer.

The protein localises to the membrane. This is an uncharacterized protein from Saccharomyces cerevisiae (strain ATCC 204508 / S288c) (Baker's yeast).